The chain runs to 154 residues: MAKMSVVAAALLALLVLGQATAFRTTVTTTLEEEQEENPRGRSEQQCREQMERQQQLNHCRMYLRQQMEESPYQNPRPLRRGEEPHLDECCEQLERMDEMCRCEGLRMMLRRQREEMELQGEQMQRIMRKAENLLSRCNLSPQRCPMGGYTAWL.

The signal sequence occupies residues 1–22 (MAKMSVVAAALLALLVLGQATA). The segment at 29–52 (TTLEEEQEENPRGRSEQQCREQME) is disordered. The span at 37–52 (ENPRGRSEQQCREQME) shows a compositional bias: basic and acidic residues. 4 disulfide bridges follow: cysteine 47–cysteine 101, cysteine 60–cysteine 90, cysteine 91–cysteine 138, and cysteine 103–cysteine 145. Positions 72-76 (PYQNP) are excised as a propeptide. The propeptide occupies 151-154 (TAWL).

Belongs to the 2S seed storage albumins family. As to quaternary structure, the mature protein consists of a small and a large chain linked by disulfide bonds.

In terms of biological role, this is a 2S seed storage protein. This chain is 2S sulfur-rich seed storage protein 2 (BE2S2), found in Bertholletia excelsa (Brazil nut).